The primary structure comprises 240 residues: 2,3,4,5-tetrahydropyridine-2,6-dicarboxylate N-acetyltransferase (240 aa).

This sequence belongs to the transferase hexapeptide repeat family. DapH subfamily.

It carries out the reaction (S)-2,3,4,5-tetrahydrodipicolinate + acetyl-CoA + H2O = L-2-acetamido-6-oxoheptanedioate + CoA. It participates in amino-acid biosynthesis; L-lysine biosynthesis via DAP pathway; LL-2,6-diaminopimelate from (S)-tetrahydrodipicolinate (acetylase route): step 1/3. In terms of biological role, catalyzes the transfer of an acetyl group from acetyl-CoA to tetrahydrodipicolinate. The sequence is that of 2,3,4,5-tetrahydropyridine-2,6-dicarboxylate N-acetyltransferase from Halalkalibacterium halodurans (strain ATCC BAA-125 / DSM 18197 / FERM 7344 / JCM 9153 / C-125) (Bacillus halodurans).